The chain runs to 432 residues: D-amino acid dehydrogenase (432 aa).

3 to 17 provides a ligand contact to FAD; sequence VVILGSGVVGVTSAW.

Belongs to the DadA oxidoreductase family. FAD is required as a cofactor.

It carries out the reaction a D-alpha-amino acid + A + H2O = a 2-oxocarboxylate + AH2 + NH4(+). It participates in amino-acid degradation; D-alanine degradation; NH(3) and pyruvate from D-alanine: step 1/1. Oxidative deamination of D-amino acids. The sequence is that of D-amino acid dehydrogenase from Salmonella paratyphi C (strain RKS4594).